The sequence spans 200 residues: Chromophore lyase CpcT/CpeT 2 (200 aa).

This sequence belongs to the CpcT/CpeT biliprotein lyase family.

Its function is as follows. Covalently attaches a chromophore to Cys residue(s) of phycobiliproteins. In Microcystis aeruginosa (strain NIES-843 / IAM M-2473), this protein is Chromophore lyase CpcT/CpeT 2.